The chain runs to 262 residues: Acyl-[acyl-carrier-protein]--UDP-N-acetylglucosamine O-acyltransferase (262 aa).

Belongs to the transferase hexapeptide repeat family. LpxA subfamily. Homotrimer.

It is found in the cytoplasm. The enzyme catalyses a (3R)-hydroxyacyl-[ACP] + UDP-N-acetyl-alpha-D-glucosamine = a UDP-3-O-[(3R)-3-hydroxyacyl]-N-acetyl-alpha-D-glucosamine + holo-[ACP]. Its pathway is glycolipid biosynthesis; lipid IV(A) biosynthesis; lipid IV(A) from (3R)-3-hydroxytetradecanoyl-[acyl-carrier-protein] and UDP-N-acetyl-alpha-D-glucosamine: step 1/6. Functionally, involved in the biosynthesis of lipid A, a phosphorylated glycolipid that anchors the lipopolysaccharide to the outer membrane of the cell. The polypeptide is Acyl-[acyl-carrier-protein]--UDP-N-acetylglucosamine O-acyltransferase (Aliivibrio salmonicida (strain LFI1238) (Vibrio salmonicida (strain LFI1238))).